The sequence spans 394 residues: E3 ubiquitin-protein ligase RNF149 (394 aa).

Residues 1–31 (MAARRRPAAGVGARDALAVLALALCTPGVGG) form the signal peptide. N-linked (GlcNAc...) asparagine glycosylation is found at asparagine 51 and asparagine 141. Residues 66 to 171 (SSLREERQGL…PKGREIFDLV (106 aa)) enclose the PA domain. The helical transmembrane segment at 197–217 (VVFVAIAFITMMIISLAWLIF) threads the bilayer. An RING-type; atypical zinc finger spans residues 265–306 (CAVCIENFKVKDVIRILPCKHIFHRICIDPWLLDHRTCPMCK). Positions 321–394 (DTQELPTPEA…SEPQHGGSIC (74 aa)) are disordered. Threonine 327 is modified (phosphothreonine). A glycan (N-linked (GlcNAc...) asparagine) is linked at asparagine 339. A phosphoserine mark is found at serine 341 and serine 344. The segment covering 352 to 362 (SNLPSSSSSES) has biased composition (low complexity).

It localises to the membrane. It carries out the reaction S-ubiquitinyl-[E2 ubiquitin-conjugating enzyme]-L-cysteine + [acceptor protein]-L-lysine = [E2 ubiquitin-conjugating enzyme]-L-cysteine + N(6)-ubiquitinyl-[acceptor protein]-L-lysine.. Its pathway is protein modification; protein ubiquitination. Functionally, E3 ubiquitin-protein ligase. Ubiquitinates BRAF, inducing its proteasomal degradation. This chain is E3 ubiquitin-protein ligase RNF149 (Rnf149), found in Mus musculus (Mouse).